The sequence spans 317 residues: WSCD family member AAEL009094 (317 aa).

A helical transmembrane segment spans residues 8-28 (LFGLAGTILVYIGGILFLSFV). N150, N226, and N232 each carry an N-linked (GlcNAc...) asparagine glycan.

The protein belongs to the WSCD family.

It is found in the membrane. The sequence is that of WSCD family member AAEL009094 from Aedes aegypti (Yellowfever mosquito).